A 404-amino-acid polypeptide reads, in one-letter code: Cytoplasmic tRNA 2-thiolation protein 2 (404 aa).

Belongs to the CTU2/NCS2 family.

It localises to the cytoplasm. Its pathway is tRNA modification; 5-methoxycarbonylmethyl-2-thiouridine-tRNA biosynthesis. Functionally, plays a central role in 2-thiolation of mcm(5)S(2)U at tRNA wobble positions of tRNA(Lys), tRNA(Glu) and tRNA(Gln). May act by forming a heterodimer with NCS6/CTU1 that ligates sulfur from thiocarboxylated URM1 onto the uridine of tRNAs at wobble position. This chain is Cytoplasmic tRNA 2-thiolation protein 2, found in Drosophila erecta (Fruit fly).